The following is a 385-amino-acid chain: GDSL esterase/lipase At5g08460 (385 aa).

A signal peptide spans 1–35 (MHDSEIFKFKDMMMMSCTVQTLVLVPWFLVVFVLA). Serine 56 (nucleophile) is an active-site residue. 2 N-linked (GlcNAc...) asparagine glycosylation sites follow: asparagine 218 and asparagine 285. Residues aspartate 350 and histidine 353 contribute to the active site. 2 N-linked (GlcNAc...) asparagine glycosylation sites follow: asparagine 368 and asparagine 378.

This sequence belongs to the 'GDSL' lipolytic enzyme family.

The protein resides in the secreted. The polypeptide is GDSL esterase/lipase At5g08460 (Arabidopsis thaliana (Mouse-ear cress)).